A 358-amino-acid polypeptide reads, in one-letter code: Testis-specific serine/threonine-protein kinase 2 (358 aa).

A Protein kinase domain is found at 12–272; that stretch reads YIVGINLGKG…IDEILSHSWL (261 aa). ATP-binding positions include 18-26 and K41; that span reads LGKGSYAKV. The active-site Proton acceptor is D136. Composition is skewed to basic and acidic residues over residues 296–315 and 329–358; these read DCKL…DHKL and NEDR…KAST. The disordered stretch occupies residues 296–358; sequence DCKLDTRPGS…SGAEVEKAST (63 aa).

Belongs to the protein kinase superfamily. CAMK Ser/Thr protein kinase family. As to quaternary structure, interacts with TSSK1B. Interacts with HSP90; this interaction stabilizes TSSK2. Mg(2+) serves as cofactor. Autophosphorylated. Post-translationally, ubiquitinated; HSP90 activity negatively regulates ubiquitination and degradation. In terms of tissue distribution, testis-specific. Expressed only in the spermatids postmeiotically at the final stages of cytodifferentiation in the seminiferous tubules (at protein level). Not detected in released sperms in the lumen of the seminiferous tubules. Also present in the epididymal sperm (at protein level).

It localises to the cytoplasm. The protein localises to the cytoskeleton. Its subcellular location is the microtubule organizing center. It is found in the centrosome. The protein resides in the centriole. It localises to the cytoplasmic vesicle. The protein localises to the secretory vesicle. Its subcellular location is the acrosome. The enzyme catalyses L-seryl-[protein] + ATP = O-phospho-L-seryl-[protein] + ADP + H(+). It carries out the reaction L-threonyl-[protein] + ATP = O-phospho-L-threonyl-[protein] + ADP + H(+). Its activity is regulated as follows. Activated by phosphorylation on Thr-174, potentially by autophosphorylation. Its function is as follows. Testis-specific serine/threonine-protein kinase required during spermatid development. Phosphorylates 'Ser-281' of TSKS and SPAG16. Involved in the late stages of spermatogenesis, during the reconstruction of the cytoplasm. During spermatogenesis, required for the transformation of a ring-shaped structure around the base of the flagellum originating from the chromatoid body. This is Testis-specific serine/threonine-protein kinase 2 (Tssk2) from Mus musculus (Mouse).